A 77-amino-acid polypeptide reads, in one-letter code: MNTRYATCYVCDELVYLFKKTFSNMSPSAAAFYQRRMAIVKNGIVLCPRCSSELKIGNGVSIPIYPHRAQQHARRSR.

Plays a role in the production of occlusion bodies as well as expression of the polyhedrin gene. This chain is Protein AC43, found in Autographa californica nuclear polyhedrosis virus (AcMNPV).